Reading from the N-terminus, the 338-residue chain is Eukaryotic translation initiation factor 3 subunit H (338 aa).

An MPN domain is found at Val22–Ala154.

Belongs to the eIF-3 subunit H family. Component of the eukaryotic translation initiation factor 3 (eIF-3) complex. The eIF-3 complex interacts with pix. Interacts with mxt.

The protein resides in the cytoplasm. In terms of biological role, component of the eukaryotic translation initiation factor 3 (eIF-3) complex, which is involved in protein synthesis of a specialized repertoire of mRNAs and, together with other initiation factors, stimulates binding of mRNA and methionyl-tRNAi to the 40S ribosome. The eIF-3 complex specifically targets and initiates translation of a subset of mRNAs involved in cell proliferation. The polypeptide is Eukaryotic translation initiation factor 3 subunit H (Drosophila erecta (Fruit fly)).